The primary structure comprises 215 residues: MTKLTARQQQVFDLIRRAIERSGFPPTRAEIAAELGFSSPNAAEEHLRALARKGVIELAAGASRGIRLLGIEDAPHQFTLPHAGLMQLSLPLVGRVAAGSPILAQEHISQHYACDPALFTSKPDYLLKVRGLSMRDAGILDGDLLAVQKRTEAKDGQIIVARLGDDVTVKRLMRRPGGLELIAENPDYENIFVKAGSAEFALEGIAVGLIRSGEL.

Residues 28–48 (RAEIAAELGFSSPNAAEEHLR) constitute a DNA-binding region (H-T-H motif). Catalysis depends on for autocatalytic cleavage activity residues serine 133 and lysine 170.

It belongs to the peptidase S24 family. In terms of assembly, homodimer.

It catalyses the reaction Hydrolysis of Ala-|-Gly bond in repressor LexA.. In terms of biological role, represses a number of genes involved in the response to DNA damage (SOS response), including recA and lexA. In the presence of single-stranded DNA, RecA interacts with LexA causing an autocatalytic cleavage which disrupts the DNA-binding part of LexA, leading to derepression of the SOS regulon and eventually DNA repair. The polypeptide is LexA repressor (Burkholderia ambifaria (strain ATCC BAA-244 / DSM 16087 / CCUG 44356 / LMG 19182 / AMMD) (Burkholderia cepacia (strain AMMD))).